Reading from the N-terminus, the 155-residue chain is MKISLIAVGTRMPAWVQDGYQEYAKRLPKELTPELVELPLAVRSKSTNTQNAIASEGDNMLKHIGSNTRTIALDVLGKSFSTEVLSQKLADWQMDGRNVNILIGGPDGLDSRCLAQADEKWSLSALTLPHPLVRVLLIEQLYRAWTILQNHPYHK.

S-adenosyl-L-methionine-binding positions include leucine 73, glycine 104, and 123–128 (LSALTL).

The protein belongs to the RNA methyltransferase RlmH family. Homodimer.

Its subcellular location is the cytoplasm. It catalyses the reaction pseudouridine(1915) in 23S rRNA + S-adenosyl-L-methionine = N(3)-methylpseudouridine(1915) in 23S rRNA + S-adenosyl-L-homocysteine + H(+). Specifically methylates the pseudouridine at position 1915 (m3Psi1915) in 23S rRNA. In Saccharophagus degradans (strain 2-40 / ATCC 43961 / DSM 17024), this protein is Ribosomal RNA large subunit methyltransferase H.